The following is a 1702-amino-acid chain: DNA polymerase (1702 aa).

DOD-type homing endonuclease domains lie at 776–909 (LLGY…SLGI) and 1229–1368 (LVGL…IVGI).

It belongs to the DNA polymerase type-B family. Post-translationally, this protein undergoes a protein self splicing that involves a post-translational excision of the two intervening regions (inteins) followed by peptide ligation.

The catalysed reaction is DNA(n) + a 2'-deoxyribonucleoside 5'-triphosphate = DNA(n+1) + diphosphate. Its function is as follows. In addition to polymerase activity, this DNA polymerase exhibits 3' to 5' exonuclease activity. Functionally, intein encoded endonucleases are thought to mediate intein mobility by site-specific recombination initiated by endonuclease cleavage at the 'homing site' in gene that lack the intein. The polypeptide is DNA polymerase (pol) (Thermococcus litoralis).